The sequence spans 343 residues: Protein RecA (343 aa).

The protein belongs to the RecA family.

Its subcellular location is the cytoplasm. Its function is as follows. Can catalyze the hydrolysis of ATP in the presence of single-stranded DNA, the ATP-dependent uptake of single-stranded DNA by duplex DNA, and the ATP-dependent hybridization of homologous single-stranded DNAs. It interacts with LexA causing its activation and leading to its autocatalytic cleavage. This Coxiella burnetii (strain RSA 493 / Nine Mile phase I) protein is Protein RecA.